The chain runs to 450 residues: tRNA modification GTPase MnmE (450 aa).

Positions 23, 79, and 118 each coordinate (6S)-5-formyl-5,6,7,8-tetrahydrofolate. The 161-residue stretch at 214-374 (GITLILVGKP…LKEHILNKVG (161 aa)) folds into the TrmE-type G domain. Asn224 lines the K(+) pocket. GTP is bound by residues 224 to 229 (NAGKSS), 243 to 249 (TSIAGTT), and 268 to 271 (DTAG). Mg(2+) is bound at residue Ser228. 3 residues coordinate K(+): Thr243, Ile245, and Thr248. Thr249 is a Mg(2+) binding site. Position 450 (Lys450) interacts with (6S)-5-formyl-5,6,7,8-tetrahydrofolate.

The protein belongs to the TRAFAC class TrmE-Era-EngA-EngB-Septin-like GTPase superfamily. TrmE GTPase family. As to quaternary structure, homodimer. Heterotetramer of two MnmE and two MnmG subunits. It depends on K(+) as a cofactor.

It localises to the cytoplasm. Its function is as follows. Exhibits a very high intrinsic GTPase hydrolysis rate. Involved in the addition of a carboxymethylaminomethyl (cmnm) group at the wobble position (U34) of certain tRNAs, forming tRNA-cmnm(5)s(2)U34. The protein is tRNA modification GTPase MnmE of Francisella tularensis subsp. holarctica (strain OSU18).